The following is a 496-amino-acid chain: RNA-binding motif protein, Y chromosome, family 1 member A1 (496 aa).

An RRM domain is found at 8–85 (GKLFIGGLNR…KAIKVEQAKK (78 aa)). Disordered regions lie at residues 78-349 (IKVE…HRDY) and 452-496 (KDQR…SSRY). 2 stretches are compositionally biased toward low complexity: residues 97 to 114 (PASS…SARG) and 149 to 159 (PVKRGPSSRSG). Residues 175 to 184 (NSWMGSQGPM) show a composition bias toward polar residues. 6 stretches are compositionally biased toward basic and acidic residues: residues 204 to 214 (RNDRMSTRHDG), 242 to 253 (DNGHSNRDEHSS), 276 to 289 (AYRD…DESY), 313 to 326 (GYRD…HESY), 335 to 349 (SSRE…HRDY), and 484 to 496 (GESR…SSRY).

As to quaternary structure, interacts with splicing factor proteins SFRS3/SRP20, TRA2B/SFRS10, KHDRBS1/SAM68 and KHDRBS3. As to expression, testis-specific.

It is found in the nucleus. RNA-binding protein involved in pre-mRNA splicing. Required for sperm development. Acts additively with TRA2B to promote exon 7 inclusion of the survival motor neuron SMN. Binds non-specifically to mRNAs. The protein is RNA-binding motif protein, Y chromosome, family 1 member A1 (RBMY1A1) of Homo sapiens (Human).